Reading from the N-terminus, the 230-residue chain is Large ribosomal subunit protein uL1 (230 aa).

This sequence belongs to the universal ribosomal protein uL1 family. In terms of assembly, part of the 50S ribosomal subunit.

In terms of biological role, binds directly to 23S rRNA. The L1 stalk is quite mobile in the ribosome, and is involved in E site tRNA release. Functionally, protein L1 is also a translational repressor protein, it controls the translation of the L11 operon by binding to its mRNA. The chain is Large ribosomal subunit protein uL1 from Sulfurimonas denitrificans (strain ATCC 33889 / DSM 1251) (Thiomicrospira denitrificans (strain ATCC 33889 / DSM 1251)).